The chain runs to 432 residues: uncharacterized protein (432 aa).

SIS domains follow at residues 105-244 (WLTE…DLVS) and 277-422 (CDKK…VDLP).

This is an uncharacterized protein from Saccharomyces cerevisiae (strain Lalvin EC1118 / Prise de mousse) (Baker's yeast).